We begin with the raw amino-acid sequence, 232 residues long: uncharacterized protein (232 aa).

This is an uncharacterized protein from Aedes vexans (Inland floodwater mosquito).